Here is a 33-residue protein sequence, read N- to C-terminus: Cytochrome b6-f complex subunit 8 (33 aa).

The helical transmembrane segment at 2–22 (LITLGWASLAALFSFSIAMVV) threads the bilayer.

The protein belongs to the PetN family. As to quaternary structure, the 4 large subunits of the cytochrome b6-f complex are cytochrome b6, subunit IV (17 kDa polypeptide, PetD), cytochrome f and the Rieske protein, while the 4 small subunits are PetG, PetL, PetM and PetN. The complex functions as a dimer.

Its subcellular location is the plastid. It is found in the organellar chromatophore thylakoid membrane. In terms of biological role, component of the cytochrome b6-f complex, which mediates electron transfer between photosystem II (PSII) and photosystem I (PSI), cyclic electron flow around PSI, and state transitions. In Paulinella chromatophora, this protein is Cytochrome b6-f complex subunit 8.